Reading from the N-terminus, the 269-residue chain is Indole-3-glycerol phosphate synthase (269 aa).

The protein belongs to the TrpC family.

The enzyme catalyses 1-(2-carboxyphenylamino)-1-deoxy-D-ribulose 5-phosphate + H(+) = (1S,2R)-1-C-(indol-3-yl)glycerol 3-phosphate + CO2 + H2O. Its pathway is amino-acid biosynthesis; L-tryptophan biosynthesis; L-tryptophan from chorismate: step 4/5. The protein is Indole-3-glycerol phosphate synthase of Roseiflexus castenholzii (strain DSM 13941 / HLO8).